Reading from the N-terminus, the 352-residue chain is Uroporphyrinogen decarboxylase (352 aa).

Substrate contacts are provided by residues 27–31 (RQAGR), D77, Y154, T209, and H325.

The protein belongs to the uroporphyrinogen decarboxylase family. Homodimer.

It localises to the cytoplasm. The enzyme catalyses uroporphyrinogen III + 4 H(+) = coproporphyrinogen III + 4 CO2. It functions in the pathway porphyrin-containing compound metabolism; protoporphyrin-IX biosynthesis; coproporphyrinogen-III from 5-aminolevulinate: step 4/4. In terms of biological role, catalyzes the decarboxylation of four acetate groups of uroporphyrinogen-III to yield coproporphyrinogen-III. This is Uroporphyrinogen decarboxylase from Legionella pneumophila (strain Corby).